Reading from the N-terminus, the 96-residue chain is MQALIEISDKQYLVKKGDTLFVPRQQTAIGDTMEISSMATIDGANTVLNPAVSVKAKVLGHVKDDKVVVFKKKRRKRYQSRNGHRQQMTQIEVVSL.

Positions 73-84 are enriched in basic residues; it reads KRRKRYQSRNGH. Residues 73–96 are disordered; the sequence is KRRKRYQSRNGHRQQMTQIEVVSL. Polar residues predominate over residues 85–96; the sequence is RQQMTQIEVVSL.

The protein belongs to the bacterial ribosomal protein bL21 family. In terms of assembly, part of the 50S ribosomal subunit. Contacts protein L20.

Its function is as follows. This protein binds to 23S rRNA in the presence of protein L20. This Chlorobium luteolum (strain DSM 273 / BCRC 81028 / 2530) (Pelodictyon luteolum) protein is Large ribosomal subunit protein bL21.